The chain runs to 728 residues: Fibulin-1 (728 aa).

The signal sequence occupies residues 1 to 17 (MRICFLLLAFLVAETFA). 30 disulfide bridges follow: C23–C49, C24–C56, C37–C57, C66–C94, C79–C95, C97–C121, C98–C128, C111–C129, C159–C168, C164–C178, C180–C279, C285–C298, C292–C307, C347–C359, C353–C368, C375–C388, C394–C404, C399–C413, C415–C428, C434–C448, C442–C457, C459–C472, C478–C489, C485–C498, C500–C513, C519–C534, C530–C543, C545–C558, C564–C576, and C569–C585. 3 Anaphylatoxin-like domains span residues 23–64 (CCAG…LLDN), 65–96 (ACDS…ECCD), and 97–129 (CCLL…NKCC). The EGF-like 1 domain occupies 155 to 194 (LGDRCASSHCEHLCHDRGGEKVECSCRSGFDLAPDGMACV). Residues 195–280 (DRNECLTRQS…GWLFQHGHCV (86 aa)) form the EGF-like 2; calcium-binding domain. Positions 281-344 (DVDECNLGSH…YPKNGMCNDI (64 aa)) constitute an EGF-like 3; calcium-binding domain. In terms of domain architecture, EGF-like 4; calcium-binding spans 343-389 (DIDECVTGHNCGAGEECVNTPGSFRCQQKGNLCAHGYEVNGATGFCE). The region spanning 390–429 (DVNECQQGVCGSMECINLPGTYKCKCGPGYEFNDAKKRCE) is the EGF-like 5; calcium-binding domain. The 44-residue stretch at 430–473 (DVDECIKFAGHVCDLSAECINTIGSFECKCKPGFQLASDGRRCE) folds into the EGF-like 6; calcium-binding domain. Residues 474 to 514 (DVNECTTGIAACEQKCVNIPGSYQCICDRGFALGPDGTKCE) enclose the EGF-like 7; calcium-binding domain. The EGF-like 8; calcium-binding domain maps to 515-559 (DIDECSIWAGSGNDLCMGGCINTKGSYLCQCPPGYKIQPDGRTCV). Residues 560-610 (DVDECAMGECAGSDKVCVNTLGSFKCHSIDCPTNYIHDSLNKNQIADGYSC) enclose the EGF-like 9; calcium-binding domain. N624 carries N-linked (GlcNAc...) asparagine glycosylation.

Belongs to the fibulin family. As to quaternary structure, homomultimerizes and interacts with various extracellular matrix components. As to expression, expressed in head muscle cells, anterior and posterior intestinal cells. Isoform a: Expressed in male and hermaphrodite gonad, anterior and posterior intestine and pharyngeal basement membranes, body-wall muscle, GLR cells, uterine attachment and mechanosensory neurons. Isoform c: Expressed on ALM/PLM mechanosensory neuron attachments, in flexible tracks connecting the pharyngeal, body-wall-muscle basement membranes and in uterine attachments.

It localises to the secreted. Its subcellular location is the extracellular space. The protein resides in the extracellular matrix. It is found in the basement membrane. Functionally, incorporated into fibronectin-containing matrix fibers. Plays a role in cell adhesion and migration along protein fibers within the extracellular matrix (ECM). Important for certain developmental processes and contributes to the supramolecular organization of ECM architecture, in particular to those of basement membranes. Involved in regulating the shape and adhesion of cells in the developing pharynx, intestine, body-wall muscle and gonadal tissue. During gonadogenesis, regulates the width of gonads and the migration of distal tip cells (DTC). Together with type IV collagen let-2 and downstream of metalloprotease mig-17, recruits nidogen nid-1 to the gonad basement membrane thereby inducing basement membrane remodeling required for the directional migration of DTCs. Acts antagonistically with metalloprotease gon-1 to maintain optimal levels of type IV collagen emb-9 in the gonad basement membrane during gonadogenesis. Required for larval development. Its function is as follows. Involved in the assembly of the flexible hemicentin-containing tracks found joining the pharynx and body-wall-muscle basement membranes. The protein is Fibulin-1 (fbl-1) of Caenorhabditis elegans.